The primary structure comprises 1275 residues: Histone-lysine N-methyltransferase PRDM16 (1275 aa).

Residues 1-10 (MRSKARARKL) show a composition bias toward basic residues. The tract at residues 1-66 (MRSKARARKL…SEDFTPKEGS (66 aa)) is disordered. Positions 82 to 211 (PDFELRESSI…PGEELLVHVK (130 aa)) constitute an SET domain. The C2H2-type 1; degenerate zinc-finger motif lies at 230 to 255 (FRCDECDELFQCRLDLRRHKKYACSS). 5 C2H2-type zinc fingers span residues 282 to 304 (HECK…MIVH), 310 to 332 (YKCD…QMSH), 338 to 361 (FECE…RSQH), 367 to 389 (HACP…KHIH), and 395 to 417 (FICE…KRMH). A C2H2-type 7; atypical zinc finger spans residues 424–446 (IKCKDCGQMFSTTSSLNKHRRFC). Disordered regions lie at residues 592 to 658 (VKNR…VPPG) and 789 to 838 (APKV…GVSE). Residues 610–625 (TTTGTDLDTTTGTGSD) are compositionally biased toward low complexity. 2 stretches are compositionally biased toward basic and acidic residues: residues 631 to 648 (DSDR…ESKP) and 821 to 835 (REPR…RKPG). Positions 680-1038 (EEQLLTASGA…KHEHEGAPVS (359 aa)) are interaction with CTBP1, CTBP2 and ZNF516. The tract at residues 740–1275 (PFTDRALAHN…SGAFNPINHL (536 aa)) is mediates interaction with SKI and regulation of TGF-beta signaling. C2H2-type zinc fingers lie at residues 951–973 (YTCR…LRTH), 979–1002 (YRCK…RNIH), and 1008–1030 (FKCH…LKKH). 2 disordered regions span residues 1027 to 1065 (LKKH…HALL) and 1084 to 1169 (EMNQ…MGFD). Residues 1038–1058 (SQHSGVLTNHLGTSASSPTSE) are compositionally biased toward polar residues. Residues 1117–1133 (DVEEEEEEELEEEDDDS) show a composition bias toward acidic residues.

Belongs to the PRDM16 family. In terms of assembly, interacts with CEBPA, CEBPB and CEBPD; the interaction is direct. Interacts with PPARG and PPARA; controls brown adipocytes. Interacts with CTBP1 and CTBP2; represses the expression of WAT-specific genes. Interacts with PPARGC1A and PPARGC1B; interaction with PPARGC1A or PPARGC1B activates the transcription of BAT-specific gene. Interacts with HDAC1, SKI and SMAD2; the interaction with SKI promotes the recruitment of SMAD3-HDAC1 complex on the promoter of TGF-beta target genes. Interacts with ZNF516; the interaction is direct and may play a role in the transcription of brown adipose tissue-specific gene. In terms of tissue distribution, enriched in BAT compared to WAT. Detected in heart, lung, kidney and brain. Expressed in nuclei of cardiomyocytes.

Its subcellular location is the nucleus. It is found in the cytoplasm. It carries out the reaction L-lysyl(9)-[histone H3] + S-adenosyl-L-methionine = N(6)-methyl-L-lysyl(9)-[histone H3] + S-adenosyl-L-homocysteine + H(+). Its function is as follows. Binds DNA and functions as a transcriptional regulator. Displays histone methyltransferase activity and monomethylates 'Lys-9' of histone H3 (H3K9me1) in vitro. Probably catalyzes the monomethylation of free histone H3 in the cytoplasm which is then transported to the nucleus and incorporated into nucleosomes where SUV39H methyltransferases use it as a substrate to catalyze histone H3 'Lys-9' trimethylation. Likely to be one of the primary histone methyltransferases along with MECOM/PRDM3 that direct cytoplasmic H3K9me1 methylation. Functions in the differentiation of brown adipose tissue (BAT) which is specialized in dissipating chemical energy in the form of heat in response to cold or excess feeding while white adipose tissue (WAT) is specialized in the storage of excess energy and the control of systemic metabolism. Together with CEBPB, regulates the differentiation of myoblastic precursors into brown adipose cells. Functions as a repressor of TGF-beta signaling. In Mus musculus (Mouse), this protein is Histone-lysine N-methyltransferase PRDM16.